The primary structure comprises 179 residues: Large ribosomal subunit protein uL6 (179 aa).

This sequence belongs to the universal ribosomal protein uL6 family. Part of the 50S ribosomal subunit.

In terms of biological role, this protein binds to the 23S rRNA, and is important in its secondary structure. It is located near the subunit interface in the base of the L7/L12 stalk, and near the tRNA binding site of the peptidyltransferase center. In Alkaliphilus oremlandii (strain OhILAs) (Clostridium oremlandii (strain OhILAs)), this protein is Large ribosomal subunit protein uL6.